The sequence spans 444 residues: ATP-dependent protease ATPase subunit HslU (444 aa).

Residues Ile20, 62-67, Asp257, Glu322, and Arg394 each bind ATP; that span reads GVGKTE.

The protein belongs to the ClpX chaperone family. HslU subfamily. A double ring-shaped homohexamer of HslV is capped on each side by a ring-shaped HslU homohexamer. The assembly of the HslU/HslV complex is dependent on binding of ATP.

The protein localises to the cytoplasm. Its function is as follows. ATPase subunit of a proteasome-like degradation complex; this subunit has chaperone activity. The binding of ATP and its subsequent hydrolysis by HslU are essential for unfolding of protein substrates subsequently hydrolyzed by HslV. HslU recognizes the N-terminal part of its protein substrates and unfolds these before they are guided to HslV for hydrolysis. The polypeptide is ATP-dependent protease ATPase subunit HslU (Bordetella avium (strain 197N)).